The sequence spans 62 residues: Small ribosomal subunit protein bS21 (62 aa).

The tract at residues 38-62 (YEKPSERRKRKMNAAVRKNRRTRHG) is disordered.

It belongs to the bacterial ribosomal protein bS21 family.

The polypeptide is Small ribosomal subunit protein bS21 (Gemmatimonas aurantiaca (strain DSM 14586 / JCM 11422 / NBRC 100505 / T-27)).